The sequence spans 249 residues: Undecaprenyl-diphosphatase (249 aa).

A run of 8 helical transmembrane segments spans residues 11 to 31, 35 to 55, 80 to 100, 101 to 121, 135 to 155, 175 to 195, 202 to 222, and 226 to 246; these read GLTEFLPISSSGHLAIFTAIF, PDVGYFAFLHLATFLAVLIFV, LVLSTIPAVIVGLCFGDFIES, VFSSTFLIGVFLSITGILMLL, IPYLDAMIVGIFQAFSVLPGI, AVKYSFLMGLPVTFGAGILEL, AEQLFGFVISFLTGLLGLYLV, and VIGGKLKIFGYYCFLASFFVL.

It belongs to the UppP family.

Its subcellular location is the cell membrane. The catalysed reaction is di-trans,octa-cis-undecaprenyl diphosphate + H2O = di-trans,octa-cis-undecaprenyl phosphate + phosphate + H(+). Its function is as follows. Catalyzes the dephosphorylation of undecaprenyl diphosphate (UPP). The polypeptide is Undecaprenyl-diphosphatase (Methanococcus maripaludis (strain C5 / ATCC BAA-1333)).